Here is a 330-residue protein sequence, read N- to C-terminus: Probable deoxyhypusine synthase (330 aa).

Residues 1–25 are disordered; sequence MTGDDADETHENVVPGSDEDLDTPD. Lysine 298 serves as the catalytic Nucleophile.

Belongs to the deoxyhypusine synthase family. NAD(+) is required as a cofactor.

It catalyses the reaction [eIF5A protein]-L-lysine + spermidine = [eIF5A protein]-deoxyhypusine + propane-1,3-diamine. Its pathway is protein modification; eIF5A hypusination. In terms of biological role, catalyzes the NAD-dependent oxidative cleavage of spermidine and the subsequent transfer of the butylamine moiety of spermidine to the epsilon-amino group of a specific lysine residue of the eIF-5A precursor protein to form the intermediate deoxyhypusine residue. In Halobacterium salinarum (strain ATCC 29341 / DSM 671 / R1), this protein is Probable deoxyhypusine synthase.